The sequence spans 457 residues: MELHGALVASPGMGHAVPILELGKHLLNHHGFDRVTVFLVTDDVSRSKSLIGKTLMEEDPKFVIRFIPLDVSGQDLSGSLLTKLAEMMRKALPEIKSSVMELEPRPRVFVVDLLGTEALEVAKELGIMRKHVLVTTSAWFLAFTVYMASLDKQELYKQLSSIGALLIPGCSPVKFERAQDPRKYIRELAESQRIGDEVITADGVFVNTWHSLEQVTIGSFLDPENLGRVMRGVPVYPVGPLVRPAEPGLKHGVLDWLDLQPKESVVYVSFGSGGALTFEQTNELAYGLELTGHRFVWVVRPPAEDDPSASMFDKTKNETEPLDFLPNGFLDRTKDIGLVVRTWAPQEEILAHKSTGGFVTHCGWNSVLESIVNGVPMVAWPLYSEQKMNARMVSGELKIALQINVADGIVKKEVIAEMVKRVMDEEEGKEMRKNVKELKKTAEEALNMTHIPSAYFT.

UDP-alpha-D-glucose is bound by residues Ser272, 343-344 (WA), 361-369 (HCGWNSVLE), and 383-386 (YSEQ).

It belongs to the UDP-glycosyltransferase family.

This Arabidopsis thaliana (Mouse-ear cress) protein is UDP-glycosyltransferase 72C1 (UGT72C1).